The chain runs to 400 residues: Putative niacin/nicotinamide transporter NiaP (400 aa).

The Cytoplasmic segment spans residues 1–14 (MGKQQPISQRKLLG). The helical transmembrane segment at 15 to 35 (VAGLGWLFDAMDVGILSFIIA) threads the bilayer. Over 36–49 (ALHVEWNLSPEEMK) the chain is Extracellular. Residues 50–70 (WIGSVNSIGMAAGAFLFGLLA) traverse the membrane as a helical segment. Over 71–77 (DRIGRKK) the chain is Cytoplasmic. Transmembrane regions (helical) follow at residues 78–98 (VFIITLLCFSIGSGISAFVTS) and 99–119 (LSAFLILRFVIGMGLGGELPV). The Cytoplasmic portion of the chain corresponds to 120 to 142 (ASTLVSEAVVPEKRGRVIVLLES). The helical transmembrane segment at 143–163 (FWAVGWLAAALISYFVIPSFG) threads the bilayer. The Extracellular portion of the chain corresponds to 164-165 (WQ). The chain crosses the membrane as a helical span at residues 166–186 (AALLLTALTAFYALYLRTSLP). Residues 187 to 217 (DSPKYESLSAKKRSMWENVKSVWARQYIRPT) are Cytoplasmic-facing. Residues 218–238 (VMLSIVWFCVVFSYYGMFLWL) form a helical membrane-spanning segment. The Extracellular portion of the chain corresponds to 239–253 (PSVMLLKGFSMIQSF). The helical transmembrane segment at 254–274 (EYVLLMTLAQLPGYFSAAWLI) threads the bilayer. At 275–280 (EKAGRK) the chain is on the cytoplasmic side. A helical membrane pass occupies residues 281–301 (WILVVYLIGTAGSAYFFGTAD). The Extracellular portion of the chain corresponds to 302-304 (SLS). The chain crosses the membrane as a helical span at residues 305–325 (LLLTAGVLLSFFNLGAWGVLY). At 326–343 (AYTPEQYPTAIRATGSGT) the chain is on the cytoplasmic side. A helical transmembrane segment spans residues 344 to 364 (TAAFGRIGGIFGPLLVGTLAA). At 365–370 (RHISFS) the chain is on the extracellular side. Residues 371 to 391 (VIFSIFCIAILLAVACILIMG) traverse the membrane as a helical segment. The Cytoplasmic segment spans residues 392-400 (KETKQTELE).

The protein belongs to the major facilitator superfamily. Sugar transporter (TC 2.A.1.1) family.

The protein resides in the cell membrane. In terms of biological role, probably involved in the uptake of amidated and deamidated forms of niacin. Increases the growth rate of E.coli that is unable to make niacin de novo; confers increased sensitivity to the toxic niacin analog 6-amino-nicotinamide to wild-type E.coli. There is probably another mechanism for niacin uptake. The sequence is that of Putative niacin/nicotinamide transporter NiaP from Bacillus subtilis (strain 168).